Here is a 562-residue protein sequence, read N- to C-terminus: NAD-dependent malic enzyme (562 aa).

Catalysis depends on tyrosine 101, which acts as the Proton donor. Position 154 (arginine 154) interacts with NAD(+). Lysine 172 acts as the Proton acceptor in catalysis. Residues glutamate 243, aspartate 244, and aspartate 267 each contribute to the a divalent metal cation site. NAD(+)-binding residues include aspartate 267 and asparagine 415.

Belongs to the malic enzymes family. As to quaternary structure, homotetramer. It depends on Mg(2+) as a cofactor. Mn(2+) is required as a cofactor.

The catalysed reaction is (S)-malate + NAD(+) = pyruvate + CO2 + NADH. The enzyme catalyses oxaloacetate + H(+) = pyruvate + CO2. In Aliivibrio fischeri (strain MJ11) (Vibrio fischeri), this protein is NAD-dependent malic enzyme.